Consider the following 345-residue polypeptide: N-acetyl-gamma-glutamyl-phosphate reductase (345 aa).

Cys-149 is a catalytic residue.

The protein belongs to the NAGSA dehydrogenase family. Type 1 subfamily.

The protein resides in the cytoplasm. It carries out the reaction N-acetyl-L-glutamate 5-semialdehyde + phosphate + NADP(+) = N-acetyl-L-glutamyl 5-phosphate + NADPH + H(+). The protein operates within amino-acid biosynthesis; L-arginine biosynthesis; N(2)-acetyl-L-ornithine from L-glutamate: step 3/4. In terms of biological role, catalyzes the NADPH-dependent reduction of N-acetyl-5-glutamyl phosphate to yield N-acetyl-L-glutamate 5-semialdehyde. In Bacillus cytotoxicus (strain DSM 22905 / CIP 110041 / 391-98 / NVH 391-98), this protein is N-acetyl-gamma-glutamyl-phosphate reductase.